An 81-amino-acid polypeptide reads, in one-letter code: Large ribosomal subunit protein bL28 (81 aa).

The protein belongs to the bacterial ribosomal protein bL28 family. Part of the 50S ribosomal subunit.

The chain is Large ribosomal subunit protein bL28 from Deinococcus radiodurans (strain ATCC 13939 / DSM 20539 / JCM 16871 / CCUG 27074 / LMG 4051 / NBRC 15346 / NCIMB 9279 / VKM B-1422 / R1).